The primary structure comprises 145 residues: RNAP inhibitory protein (145 aa).

Residues 110 to 123 form a C-terminal tail, binds in the RNAP DNA-binding channel region; the sequence is HIKKLNLNSLAMLS.

It belongs to the viral ORF131/RIP family. In terms of assembly, interacts with host RNA polymerase (RNAP) subunits Rpo1N and Rpo2.

The protein localises to the virion. Plays a role in the inhibition of global transcription by interacting with the RNA polymerase (RNAP) clamp, locking it in a fixed position and inhibiting the formation and/or stability of the pre-initiation complex (PIC). Also overlaps with the transcription factor B binding site; overall RIP probably interferes with DNA loading onto RNAP but does not displace DNA once it is loaded. May play a role in virus particle assembly, possibly by dissociating active RNAP from the virus genome. The polypeptide is RNAP inhibitory protein (Acidianus two-tailed virus (ATV)).